A 367-amino-acid chain; its full sequence is Anhydro-N-acetylmuramic acid kinase (367 aa).

13 to 20 contributes to the ATP binding site; sequence GTSMDGAD.

Belongs to the anhydro-N-acetylmuramic acid kinase family.

The catalysed reaction is 1,6-anhydro-N-acetyl-beta-muramate + ATP + H2O = N-acetyl-D-muramate 6-phosphate + ADP + H(+). It functions in the pathway amino-sugar metabolism; 1,6-anhydro-N-acetylmuramate degradation. The protein operates within cell wall biogenesis; peptidoglycan recycling. Catalyzes the specific phosphorylation of 1,6-anhydro-N-acetylmuramic acid (anhMurNAc) with the simultaneous cleavage of the 1,6-anhydro ring, generating MurNAc-6-P. Is required for the utilization of anhMurNAc either imported from the medium or derived from its own cell wall murein, and thus plays a role in cell wall recycling. This Neisseria meningitidis serogroup B (strain ATCC BAA-335 / MC58) protein is Anhydro-N-acetylmuramic acid kinase.